Consider the following 206-residue polypeptide: Insecticyanin-B (206 aa).

The N-terminal stretch at 1–17 (MQRFLVFTIVAVATAAA) is a signal peptide. 2 disulfides stabilise this stretch: cysteine 26-cysteine 136 and cysteine 60-cysteine 192.

Belongs to the calycin superfamily. Lipocalin family. In terms of assembly, homotetramer. Synthesized only in the caterpillars, apparently by the epidermis and secreted into the hemolymph. The protein is passed over from the larval hemolymph to that of pupae and adults and is sequestered in the eggs.

It is found in the secreted. In terms of biological role, this protein binds a chromophore: biliverdin IX, isomer gamma. Mixed with lipoprotein-bound carotenes, this blue protein provides hornworms with their green cryptic coloration which serves a camouflage. The polypeptide is Insecticyanin-B (INSB) (Manduca sexta (Tobacco hawkmoth)).